A 122-amino-acid chain; its full sequence is Putative iron-sulfur cluster insertion protein ErpA (122 aa).

Iron-sulfur cluster contacts are provided by Cys50, Cys114, and Cys116.

It belongs to the HesB/IscA family. Homodimer. It depends on iron-sulfur cluster as a cofactor.

Required for insertion of 4Fe-4S clusters. The protein is Putative iron-sulfur cluster insertion protein ErpA of Cupriavidus metallidurans (strain ATCC 43123 / DSM 2839 / NBRC 102507 / CH34) (Ralstonia metallidurans).